The following is an 815-amino-acid chain: Heme-copper oxidase subunit I+III (815 aa).

The segment at Met-1–Phe-467 is COX1. A helical membrane pass occupies residues Leu-26–Phe-46. His-70 lines the Fe(II)-heme a pocket. The next 18 membrane-spanning stretches (helical) occupy residues Gly-71–Val-91, Leu-105–Phe-125, Leu-157–Ile-177, Ile-197–Leu-217, Leu-242–Met-262, Leu-281–Ile-301, Ile-314–Leu-334, Leu-339–Gly-359, Val-380–Leu-400, Ile-419–Met-439, Gly-463–Val-483, Ala-580–Leu-600, Trp-637–Ile-657, Leu-683–Val-703, Tyr-708–Val-728, Leu-736–Thr-756, Ala-758–Phe-778, and Val-791–Leu-811. Residues His-248, Tyr-252, His-297, and His-298 each coordinate Cu cation. Residues His-248–Tyr-252 constitute a cross-link (1'-histidyl-3'-tyrosine (His-Tyr)). His-383 provides a ligand contact to heme a3. Residue His-385 participates in Fe(II)-heme a binding. The tract at residues Asp-545–Val-815 is COX3.

In the N-terminal section; belongs to the heme-copper respiratory oxidase family. It in the C-terminal section; belongs to the cytochrome c oxidase subunit 3 family. Heme is required as a cofactor. Cu cation serves as cofactor.

The protein localises to the cell membrane. The sequence is that of Heme-copper oxidase subunit I+III (aoxB) from Aeropyrum pernix (strain ATCC 700893 / DSM 11879 / JCM 9820 / NBRC 100138 / K1).